Reading from the N-terminus, the 980-residue chain is Serine/threonine-protein phosphatase 4 regulatory subunit 3 (980 aa).

Positions 1 to 105 constitute a WH1 domain; that stretch reads MTTDTRRRVK…EKICQVQGKD (105 aa). Disordered regions lie at residues 640 to 668, 695 to 861, and 885 to 980; these read RDKM…RQME, VSEK…SLCD, and VTAA…ARQA. Residues 695 to 708 show a composition bias toward polar residues; it reads VSEKNGPQTQNQQK. 4 stretches are compositionally biased toward low complexity: residues 709–749, 757–789, 803–859, and 885–926; these read SSPP…SSSP, QTQA…QQTQ, EAPQ…AASL, and VTAA…SPAS. Positions 929–939 are enriched in polar residues; it reads QDANSTEGTSS. Basic and acidic residues predominate over residues 940-951; sequence EADKTTAKKGLV. Over residues 953–968 the composition is skewed to acidic residues; sequence YESDSGEDDYEEDEYS.

This sequence belongs to the SMEK family. Serine/threonine-protein phosphatase 4 (PP4) occurs in different assemblies of the catalytic and one or more regulatory subunits. Probably part of a PP4 PPP4C-PPP4R2-PPP4R3 complex containing Pp4-19C, PPP4R2r and flfl. Interacts with mira. Expressed in neuroblasts.

The protein resides in the nucleus. It localises to the membrane. It is found in the cytoplasm. Functionally, regulatory subunit of serine/threonine-protein phosphatase 4. The probable PP4 complex Pp4-19C-PPP4R2r-flfl (PPP4C-PPP4R2-PPP4R3) is required to prevent caspase induced cell death (in vitro). May be involved in DNA damage repair. Key mediator specific for the localization of mira and associated cell fate determinants during both interphase and mitosis. Nuclear Flfl is required to exclude mira/pros from the nucleus when inefficiently bound to the cytoskeleton/cortex, whereas cytosolic or membrane-associated flfl is required for the cortical association and asymmetric localization of mira/pros/brat/stau at metaphase and anaphase. The sequence is that of Serine/threonine-protein phosphatase 4 regulatory subunit 3 (flfl) from Drosophila melanogaster (Fruit fly).